Reading from the N-terminus, the 374-residue chain is MSNDKDSFNVSDLTSALKDEDRAGLVNALKNKLQNLAGQHSDVLENLTPKIRRRVEVLREIQGKHDEIETKFREERAALEAKYQKLYQPLYNKRYEIVNGATEVEGAPEDAKMDQGDEKTAEEKGVPSFWLTALKNNDVISEEITERDEGALIYLKDIKWCKIEEPKGFKLEFFFDQNPYFKNTLLTKAYHMIDEDEPLLEKAIGTEIDWYPGKCLTQKILKKKPKKGAKNAKPITKTEDCESFFNFFNPPQVPDDDEDIDEERAEELQNLMEQDYDIGSTIREKIIPHAVSWFTGEAIEGEEFEIDNDDEDDIDEDEDEDEEDEDEDEEEDDEDEEEEVSKTKKKPSVLHKKGGRPQVTDDQQGERPPECKQQ.

The stretch at 26–80 (VNALKNKLQNLAGQHSDVLENLTPKIRRRVEVLREIQGKHDEIETKFREERAALE) forms a coiled coil. A Phosphoserine modification is found at Ser-41. The Nuclear export signal signature appears at 47-62 (LTPKIRRRVEVLREIQ). Residues 222–227 (KKKPKK) carry the Nuclear localization signal motif. Over residues 299–339 (IEGEEFEIDNDDEDDIDEDEDEDEEDEDEDEEEDDEDEEEE) the composition is skewed to acidic residues. Residues 299-374 (IEGEEFEIDN…GERPPECKQQ (76 aa)) are disordered. The segment covering 343-355 (TKKKPSVLHKKGG) has biased composition (basic residues). Basic and acidic residues predominate over residues 364–374 (QGERPPECKQQ). Cys-371 is modified (cysteine methyl ester). The S-farnesyl cysteine moiety is linked to residue Cys-371. A propeptide spans 372–374 (KQQ) (removed in mature form).

It belongs to the nucleosome assembly protein (NAP) family. As to quaternary structure, can form homomeric and heteromeric protein complexes with NAP1;1, NAP1;2 and NAP1;4. Binds histone H2A and associates with chromatin in vivo. In terms of tissue distribution, ubiquitous.

It is found in the nucleus. Its subcellular location is the cytoplasm. May modulate chromatin structure by regulation of nucleosome assembly/disassembly. May function in nucleotide excision repair (NER). Involved in somatic homologous recombination. Could be involved in response to abscisic acid (ABA) and to salt stress. The chain is Nucleosome assembly protein 1;3 (NAP1;3) from Arabidopsis thaliana (Mouse-ear cress).